The sequence spans 87 residues: Small ribosomal subunit protein bS20 (87 aa).

Positions 1–25 (MANSAQARKRARQNISHRNRNMSLR) are disordered. Residues 7-20 (ARKRARQNISHRNR) are compositionally biased toward basic residues.

Belongs to the bacterial ribosomal protein bS20 family.

Binds directly to 16S ribosomal RNA. The polypeptide is Small ribosomal subunit protein bS20 (Nitrosospira multiformis (strain ATCC 25196 / NCIMB 11849 / C 71)).